The primary structure comprises 280 residues: Large ribosomal subunit protein uL2 (280 aa).

2 disordered regions span residues 27–59 (STPE…GGHK) and 225–280 (VMNP…KHSR). 2 stretches are compositionally biased toward basic residues: residues 37–59 (LHGR…GGHK) and 268–280 (IVRR…KHSR).

The protein belongs to the universal ribosomal protein uL2 family. Part of the 50S ribosomal subunit. Forms a bridge to the 30S subunit in the 70S ribosome.

Functionally, one of the primary rRNA binding proteins. Required for association of the 30S and 50S subunits to form the 70S ribosome, for tRNA binding and peptide bond formation. It has been suggested to have peptidyltransferase activity; this is somewhat controversial. Makes several contacts with the 16S rRNA in the 70S ribosome. The polypeptide is Large ribosomal subunit protein uL2 (Mycobacterium bovis (strain ATCC BAA-935 / AF2122/97)).